We begin with the raw amino-acid sequence, 86 residues long: Alpha-mammal toxin Ts3 (86 aa).

Positions 1-19 are cleaved as a signal peptide; sequence MNYFILLVVVCLLTAGTEG. An LCN-type CS-alpha/beta domain is found at 21 to 82; the sequence is KDGYPVEYDN…EPTKTNGKCK (62 aa). 4 disulfides stabilise this stretch: Cys-31–Cys-81, Cys-35–Cys-57, Cys-43–Cys-64, and Cys-47–Cys-66. Ser-83 carries the serine amide modification.

Expressed by the venom gland.

Its subcellular location is the secreted. Alpha toxins bind voltage-independently at site-3 of sodium channels (Nav) and inhibit the inactivation of the activated channels, thereby blocking neuronal transmission. This synthetic toxin inhibits inactivation of rat Nav1.4/SCN4A (when tested at 201 nM). In addition, it has been shown to cause a persistent sodium channel activation in nitrergic inhibitory fibers innervating the rabbit corpus cavernosum, resulting in NO release and cavernosal smooth muscle relaxation. This toxin is active against mammals. Its function is as follows. this synthetic peptide with a Ser at position 31 (C12S) acts as a bradykinin-potentiating peptide (BPP). Induces endothelium-dependent vasodilation that is reverted by NO synthase inhibitor, suggesting it activates molecular targets on vascular endothelium leading to NO production and vasodilation. It appears to induce vasodilation through muscarinic acetylcholine receptors (AChR) M2 (CHRM2) and M3 (CHRM3). Does not inhibit the angiotensin-converting enzyme (ACE). Does not act via bradykinin B2 receptor. This is Alpha-mammal toxin Ts3 from Tityus serrulatus (Brazilian scorpion).